We begin with the raw amino-acid sequence, 513 residues long: ATP synthase subunit alpha (513 aa).

169–176 (GDRQTGKT) contributes to the ATP binding site.

Belongs to the ATPase alpha/beta chains family. F-type ATPases have 2 components, CF(1) - the catalytic core - and CF(0) - the membrane proton channel. CF(1) has five subunits: alpha(3), beta(3), gamma(1), delta(1), epsilon(1). CF(0) has three main subunits: a(1), b(2) and c(9-12). The alpha and beta chains form an alternating ring which encloses part of the gamma chain. CF(1) is attached to CF(0) by a central stalk formed by the gamma and epsilon chains, while a peripheral stalk is formed by the delta and b chains.

Its subcellular location is the cell inner membrane. It carries out the reaction ATP + H2O + 4 H(+)(in) = ADP + phosphate + 5 H(+)(out). Produces ATP from ADP in the presence of a proton gradient across the membrane. The alpha chain is a regulatory subunit. In Cupriavidus metallidurans (strain ATCC 43123 / DSM 2839 / NBRC 102507 / CH34) (Ralstonia metallidurans), this protein is ATP synthase subunit alpha.